The following is a 223-amino-acid chain: Adenylate kinase (223 aa).

An ATP-binding site is contributed by Gly10–Thr15. The interval Glu30–Val59 is NMP. Residues Ser31, Arg36, Glu57–Val59, Gly84–Arg87, and Gln91 each bind AMP. Residues Gly125–Asp164 form an LID region. ATP is bound at residue Arg126. AMP is bound by residues Arg161 and Arg173. Gly209 contacts ATP.

Belongs to the adenylate kinase family. As to quaternary structure, monomer.

The protein resides in the cytoplasm. It carries out the reaction AMP + ATP = 2 ADP. Its pathway is purine metabolism; AMP biosynthesis via salvage pathway; AMP from ADP: step 1/1. In terms of biological role, catalyzes the reversible transfer of the terminal phosphate group between ATP and AMP. Plays an important role in cellular energy homeostasis and in adenine nucleotide metabolism. This is Adenylate kinase from Maridesulfovibrio salexigens (strain ATCC 14822 / DSM 2638 / NCIMB 8403 / VKM B-1763) (Desulfovibrio salexigens).